The primary structure comprises 82 residues: Small ribosomal subunit protein bS16 (82 aa).

The protein belongs to the bacterial ribosomal protein bS16 family.

This is Small ribosomal subunit protein bS16 from Cyanothece sp. (strain PCC 7425 / ATCC 29141).